Reading from the N-terminus, the 322-residue chain is UPF0324 membrane protein BB4178 (322 aa).

10 helical membrane passes run 13–35 (FIRQ…YGNF), 50–69 (FTAR…NISI), 76–98 (GLPG…TVAG), 108–127 (TAML…VLAF), 139–161 (AVAV…VIYH), 171–193 (ALGI…ASNI), 209–231 (VALL…AAGA), 241–260 (VPWF…LDIL), 273–292 (VFVL…FAQI), and 296–318 (GPRV…YGIV).

This sequence belongs to the UPF0324 family.

The protein localises to the cell membrane. The protein is UPF0324 membrane protein BB4178 of Bordetella bronchiseptica (strain ATCC BAA-588 / NCTC 13252 / RB50) (Alcaligenes bronchisepticus).